We begin with the raw amino-acid sequence, 811 residues long: G-type lectin S-receptor-like serine/threonine-protein kinase LECRK3 (811 aa).

A signal peptide spans 1 to 23 (MAHLLFLPILQLLLLYCTKSAQA). One can recognise a Bulb-type lectin domain in the interval 24-153 (QLNISIGSSL…DGATKWESFG (130 aa)). Residues 24-464 (QLNISIGSSL…DKKYWILGSS (441 aa)) are Extracellular-facing. 7 N-linked (GlcNAc...) asparagine glycosylation sites follow: Asn26, Asn39, Asn59, Asn219, Asn226, Asn237, and Asn242. The EGF-like; atypical domain maps to 292–344 (PENICQSIQTMVGSGACGFNSYCTIDGTKNTTSCLCPQNYKFIDDKRKYKGCR). Intrachain disulfides connect Cys296-Cys314, Cys308-Cys325, Cys327-Cys343, Cys389-Cys411, and Cys393-Cys399. Asn321 carries N-linked (GlcNAc...) asparagine glycosylation. In terms of domain architecture, PAN spans 352-430 (CDLDETTAML…GKMDVNVPRT (79 aa)). Residues 465–485 (LLFGSSVLVNFLLISVMLFGT) form a helical membrane-spanning segment. The Cytoplasmic segment spans residues 486–811 (YCSITSRKKI…DPSSYISSLA (326 aa)). The region spanning 521 to 795 (GGFQEVLGTG…KVTQMLDGAV (275 aa)) is the Protein kinase domain. Residues 527 to 535 (LGTGASGVV) and Lys551 each bind ATP. Residue Asp645 is the Proton acceptor of the active site.

This sequence belongs to the protein kinase superfamily. Ser/Thr protein kinase family.

The protein localises to the membrane. It catalyses the reaction L-seryl-[protein] + ATP = O-phospho-L-seryl-[protein] + ADP + H(+). The catalysed reaction is L-threonyl-[protein] + ATP = O-phospho-L-threonyl-[protein] + ADP + H(+). Functionally, involved in resistance against the herbivorous insect brown planthopper (N.lugens, BPH). Member of the BPH3 (BPH resistance locus 3) cluster which contains LECRK1, LECRK2 and LECRK3. The polypeptide is G-type lectin S-receptor-like serine/threonine-protein kinase LECRK3 (Oryza sativa subsp. indica (Rice)).